Here is a 116-residue protein sequence, read N- to C-terminus: Putative BPES syndrome breakpoint region protein (116 aa).

Seems to be expressed only in testis.

The polypeptide is Putative BPES syndrome breakpoint region protein (BPESC1) (Homo sapiens (Human)).